Here is a 275-residue protein sequence, read N- to C-terminus: S-methyl-5'-thioadenosine phosphorylase (275 aa).

Residues S20, 62–63 (RH), and 95–96 (SA) contribute to the phosphate site. 3 disulfides stabilise this stretch: C143/C210, C205/C266, and C264/C267. Residue M195 coordinates substrate. T196 contributes to the phosphate binding site. 219-221 (DYD) is a binding site for substrate.

The protein belongs to the PNP/MTAP phosphorylase family. MTAP subfamily. In terms of assembly, homohexamer. Dimer of a homotrimer.

The enzyme catalyses S-methyl-5'-thioadenosine + phosphate = 5-(methylsulfanyl)-alpha-D-ribose 1-phosphate + adenine. It participates in amino-acid biosynthesis; L-methionine biosynthesis via salvage pathway; S-methyl-5-thio-alpha-D-ribose 1-phosphate from S-methyl-5'-thioadenosine (phosphorylase route): step 1/1. In terms of biological role, catalyzes the reversible phosphorylation of S-methyl-5'-thioadenosine (MTA) to adenine and 5-methylthioribose-1-phosphate. Involved in the breakdown of MTA, a major by-product of polyamine biosynthesis. Responsible for the first step in the methionine salvage pathway after MTA has been generated from S-adenosylmethionine. Has broad substrate specificity with 6-aminopurine nucleosides as preferred substrates. The polypeptide is S-methyl-5'-thioadenosine phosphorylase (Aeropyrum pernix (strain ATCC 700893 / DSM 11879 / JCM 9820 / NBRC 100138 / K1)).